Reading from the N-terminus, the 196-residue chain is Probable GTP-binding protein EngB (196 aa).

The region spanning 22 to 194 is the EngB-type G domain; it reads DKKEIAFAGR…LKTIGEILGD (173 aa). Residues 30–37, 56–60, 74–77, 141–144, and 173–175 contribute to the GTP site; these read GRSNVGKS, GKTRS, DLPG, TKSD, and FSS. Residues serine 37 and threonine 58 each coordinate Mg(2+).

The protein belongs to the TRAFAC class TrmE-Era-EngA-EngB-Septin-like GTPase superfamily. EngB GTPase family. Mg(2+) serves as cofactor.

In terms of biological role, necessary for normal cell division and for the maintenance of normal septation. This chain is Probable GTP-binding protein EngB, found in Petrotoga mobilis (strain DSM 10674 / SJ95).